The primary structure comprises 503 residues: Capsanthin/capsorubin synthase, chromoplastic (503 aa).

88-117 (VIIIGTGPAGLRLAEQVSSRHSVKVCCVDP) lines the NAD(+) pocket.

This sequence belongs to the lycopene cyclase family.

The protein localises to the plastid. It localises to the chromoplast. The enzyme catalyses all-trans-violaxanthin = all-trans-capsorubin. It carries out the reaction all-trans-antheraxanthin = all-trans-capsanthin. It functions in the pathway carotenoid biosynthesis; capsanthin biosynthesis; capsanthin from antheraxanthin: step 1/1. It participates in carotenoid biosynthesis; capsorubin biosynthesis; capsorubin from violaxanthin: step 1/1. In terms of biological role, catalyzes the conversion of the ubiquitous 5,6-epoxycarotenoids, antheraxanthin and violaxanthin, into capsanthin and capsorubin, respectively. The chain is Capsanthin/capsorubin synthase, chromoplastic (CCS) from Citrus sinensis (Sweet orange).